Reading from the N-terminus, the 196-residue chain is Secreted phosphoprotein 24 (196 aa).

The N-terminal stretch at 1–19 is a signal peptide; it reads MKWCGVLMVALLQSLCCSG. 2 disulfides stabilise this stretch: C83–C94 and C107–C125. The disordered stretch occupies residues 125–196; that stretch reads CGQDSSSSES…RGDSFGNHLE (72 aa). A compositionally biased stretch (low complexity) spans 129-138; it reads SSSSESSSEE.

Belongs to the SPP2 family. Multiply phosphorylated at serine residues.

Its subcellular location is the secreted. Its function is as follows. Could coordinate an aspect of bone turnover. The chain is Secreted phosphoprotein 24 (spp2) from Salmo salar (Atlantic salmon).